The primary structure comprises 189 residues: UPF0301 protein RrIowa_0061 (189 aa).

The protein belongs to the UPF0301 (AlgH) family.

In Rickettsia rickettsii (strain Iowa), this protein is UPF0301 protein RrIowa_0061.